Consider the following 218-residue polypeptide: Glutathione S-transferase Mu 2 (218 aa).

Residues 2–88 (PIILGYWNIR…YIARKHNLCG (87 aa)) form the GST N-terminal domain. Glutathione is bound at residue 7 to 8 (YW). Phosphoserine is present on residues serine 27 and serine 44. Glutathione is bound by residues 43–46 (RSQW), lysine 50, 59–60 (NL), and 72–73 (QS). Residues 90–208 (TEKEKIQEDI…KSSRFLPRPV (119 aa)) form the GST C-terminal domain. Tyrosine 116 is a binding site for substrate.

It belongs to the GST superfamily. Mu family. As to quaternary structure, homodimer.

It is found in the cytoplasm. It catalyses the reaction RX + glutathione = an S-substituted glutathione + a halide anion + H(+). The enzyme catalyses 11(S)-hydroxy-14(S),15(S)-epoxy-(5Z,8Z,12E)-eicosatrienoate + glutathione = (11S,15S)-dihydroxy-14(R)-S-glutathionyl-(5Z,8Z,12E)-eicosatrienoate. Its function is as follows. Conjugation of reduced glutathione to a wide number of exogenous and endogenous hydrophobic electrophiles. Participates in the formation of novel hepoxilin regioisomers. This is Glutathione S-transferase Mu 2 (GSTM2) from Pongo abelii (Sumatran orangutan).